We begin with the raw amino-acid sequence, 235 residues long: High affinity immunoglobulin epsilon receptor subunit beta (235 aa).

Residues 1–23 (MDTENRSRADLALPNPQESSSAP) form a disordered region. The Cytoplasmic portion of the chain corresponds to 1 to 51 (MDTENRSRADLALPNPQESSSAPDIELLEASPAKAAPPKQTWRTFLKKELE). Residues 52–71 (FLGATQILVGLICLCFGTIV) traverse the membrane as a helical segment. At 72–89 (CSVLYVSDFDEEVLLLYK) the chain is on the extracellular side. The helical transmembrane segment at 90–109 (LGYPFWGAVLFVLSGFLSII) threads the bilayer. Topologically, residues 110–122 (SERKNTLYLVRGS) are cytoplasmic. Residues 123–142 (LGANIVSSIAAGTGIAMLIL) form a helical membrane-spanning segment. At 143–171 (NLTNNFAYMNNCKNVTEDDGCFVASFTTE) the chain is on the extracellular side. A helical membrane pass occupies residues 172 to 191 (LVLMMLFLTILAFCSAVLFT). Over 192 to 235 (IYRIGQELESKKVPDDRLYEELNVYSPIYSELEDKGETSSPVDS) the chain is Cytoplasmic. Phosphotyrosine is present on residues Tyr210 and Tyr216. Ser217 carries the post-translational modification Phosphoserine. Tyr220 bears the Phosphotyrosine mark.

It belongs to the MS4A family. As to quaternary structure, tetramer of an alpha chain, a beta chain, and two disulfide linked gamma chains. Binds LILRB1. Interacts with FGR. Interacts with FGR and FES/FPS. Interacts with LYN. In terms of processing, phosphorylated on tyrosine residues by LYN.

The protein localises to the membrane. In terms of biological role, high affinity receptor that binds to the Fc region of immunoglobulins epsilon. Aggregation of FCER1 by multivalent antigens is required for the full mast cell response, including the release of preformed mediators (such as histamine) by degranulation and de novo production of lipid mediators and cytokines. Also mediates the secretion of important lymphokines. Binding of allergen to receptor-bound IgE leads to cell activation and the release of mediators responsible for the manifestations of allergy. The polypeptide is High affinity immunoglobulin epsilon receptor subunit beta (Ms4a2) (Mus musculus (Mouse)).